Consider the following 217-residue polypeptide: Pyrrolidone-carboxylate peptidase (217 aa).

Active-site residues include glutamate 78, cysteine 141, and histidine 168.

It belongs to the peptidase C15 family. As to quaternary structure, homotetramer.

It localises to the cytoplasm. The catalysed reaction is Release of an N-terminal pyroglutamyl group from a polypeptide, the second amino acid generally not being Pro.. Removes 5-oxoproline from various penultimate amino acid residues except L-proline. The polypeptide is Pyrrolidone-carboxylate peptidase (Treponema denticola (strain ATCC 35405 / DSM 14222 / CIP 103919 / JCM 8153 / KCTC 15104)).